The following is a 62-amino-acid chain: Sperm protamine P1 (62 aa).

Positions 1–62 (MARYRHSRSR…RYSRRRRRRY (62 aa)) are disordered.

This sequence belongs to the protamine P1 family. In terms of tissue distribution, testis.

Its subcellular location is the nucleus. The protein localises to the chromosome. In terms of biological role, protamines substitute for histones in the chromatin of sperm during the haploid phase of spermatogenesis. They compact sperm DNA into a highly condensed, stable and inactive complex. The sequence is that of Sperm protamine P1 (PRM1) from Thylogale stigmatica (Red-legged pademelon).